A 247-amino-acid chain; its full sequence is Exosome complex component Rrp4 (247 aa).

The S1 motif domain maps to 70–143 (GDTVIGLIED…INPILSIKGK (74 aa)). Residues 149–211 (SSGIVIDIPP…EALVEAIQII (63 aa)) enclose the KH domain.

Belongs to the RRP4 family. In terms of assembly, component of the archaeal exosome complex. Forms a trimer of Rrp4 and/or Csl4 subunits. The trimer associates with a hexameric ring-like arrangement composed of 3 Rrp41-Rrp42 heterodimers.

It localises to the cytoplasm. Functionally, non-catalytic component of the exosome, which is a complex involved in RNA degradation. Increases the RNA binding and the efficiency of RNA degradation. Confers strong poly(A) specificity to the exosome. The polypeptide is Exosome complex component Rrp4 (Sulfurisphaera tokodaii (strain DSM 16993 / JCM 10545 / NBRC 100140 / 7) (Sulfolobus tokodaii)).